Reading from the N-terminus, the 215-residue chain is Cytochrome b6 (215 aa).

The chain crosses the membrane as a helical span at residues 32–52 (IFYCLGGVTLICFLVQFATGF). Position 35 (Cys-35) interacts with heme c. The heme b site is built by His-86 and His-100. 3 consecutive transmembrane segments (helical) span residues 90 to 110 (ASMM…TGGF), 116 to 136 (LTWV…VTGY), and 186 to 206 (AHTF…FLMI). Heme b-binding residues include His-187 and His-202.

This sequence belongs to the cytochrome b family. PetB subfamily. The 4 large subunits of the cytochrome b6-f complex are cytochrome b6, subunit IV (17 kDa polypeptide, PetD), cytochrome f and the Rieske protein, while the 4 small subunits are PetG, PetL, PetM and PetN. The complex functions as a dimer. Heme b serves as cofactor. Heme c is required as a cofactor.

It is found in the cell inner membrane. Its function is as follows. Component of the cytochrome b6-f complex, which mediates electron transfer between photosystem II (PSII) and photosystem I (PSI), cyclic electron flow around PSI, and state transitions. The protein is Cytochrome b6 of Gloeobacter violaceus (strain ATCC 29082 / PCC 7421).